The primary structure comprises 636 residues: MVQASSHAEGGHEGKQGAARSMGLLVAAVGVVYGDIGTSPLYTLKEVFTGGYGVQVNHDGVLGILSLILWSLLWVVSFKYVMFILRADNQGEGGTMALTALARRATAEYPKLRALMVGCGLVGASLFYGDSMITPAVSVLSAVEGMGLAFEGIDHWVVPISLVVLVALFLVQKHGTEKIGKLFGPIMVTWFVVLGALGVHGISQSPEVLKAFNPGWALNFFIVHPGMGVAILGAVVLALTGAEALYADMGHFGRKPIARAWFALVLPALVLNYFGQGAILLQNPEAARNPFYLLAPGWALLPLVGLATMATVIASQAVISGAFSLTRQAIQLGYVPRMQIQHTSSDEQGQIYIGAVNWTLMVGVVLLVIGFESSGALAAAYGVAVTGTMLMTTILVSAVMLLLWKWPPVLAVPLLVGFLLVDGLFFAANVPKIVQGGAFPVLAGIVLFVLMSTWKRGKQILVDRIDEGALPLPVFISSIRVQPPHRVEGTAVFLTARADAVPHALLHNMLHNQVLHSQVVLLTVVSEDRPRVPEHERFEVEAYGDGFFRVLLHFGFMDEPDVPAALKLCHLDDLDFSPMRTTYFLSRETVIASRLEGMSRWRGNLFAFLLKNANGNLRFFNLPLNRVIELGTQVEI.

12 helical membrane-spanning segments follow: residues 22–42 (MGLLVAAVGVVYGDIGTSPLY), 64–84 (ILSLILWSLLWVVSFKYVMFI), 114–134 (ALMVGCGLVGASLFYGDSMIT), 150–170 (FEGIDHWVVPISLVVLVALFL), 182–202 (LFGPIMVTWFVVLGALGVHGI), 220–240 (FFIVHPGMGVAILGAVVLALT), 261–281 (WFALVLPALVLNYFGQGAILL), 293–313 (LLAPGWALLPLVGLATMATVI), 351–371 (IYIGAVNWTLMVGVVLLVIGF), 383–403 (VAVTGTMLMTTILVSAVMLLL), 408–428 (PVLAVPLLVGFLLVDGLFFAA), and 433–453 (IVQGGAFPVLAGIVLFVLMST).

It belongs to the HAK/KUP transporter (TC 2.A.72) family.

The protein localises to the cell inner membrane. It catalyses the reaction K(+)(in) + H(+)(in) = K(+)(out) + H(+)(out). In terms of biological role, transport of potassium into the cell. Likely operates as a K(+):H(+) symporter. The chain is Probable potassium transport system protein Kup from Pseudomonas entomophila (strain L48).